The chain runs to 415 residues: uncharacterized protein (415 aa).

4 residues coordinate [4Fe-4S] cluster: cysteine 66, cysteine 72, cysteine 75, and cysteine 149. The S-adenosyl-L-methionine site is built by glutamine 249, phenylalanine 276, glutamate 296, and aspartate 344. The active-site Nucleophile is the cysteine 370.

Belongs to the class I-like SAM-binding methyltransferase superfamily. RNA M5U methyltransferase family.

This is an uncharacterized protein from Brucella suis biovar 1 (strain 1330).